Reading from the N-terminus, the 507-residue chain is ATP synthase subunit alpha, chloroplastic (507 aa).

170-177 contributes to the ATP binding site; the sequence is GDRQTGKT.

This sequence belongs to the ATPase alpha/beta chains family. In terms of assembly, F-type ATPases have 2 components, CF(1) - the catalytic core - and CF(0) - the membrane proton channel. CF(1) has five subunits: alpha(3), beta(3), gamma(1), delta(1), epsilon(1). CF(0) has four main subunits: a, b, b' and c.

Its subcellular location is the plastid. The protein resides in the chloroplast thylakoid membrane. It catalyses the reaction ATP + H2O + 4 H(+)(in) = ADP + phosphate + 5 H(+)(out). Its function is as follows. Produces ATP from ADP in the presence of a proton gradient across the membrane. The alpha chain is a regulatory subunit. In Drimys granadensis, this protein is ATP synthase subunit alpha, chloroplastic.